A 137-amino-acid polypeptide reads, in one-letter code: Nucleoside diphosphate kinase (137 aa).

ATP-binding residues include lysine 9, phenylalanine 57, arginine 85, threonine 91, arginine 102, and asparagine 112. Histidine 115 functions as the Pros-phosphohistidine intermediate in the catalytic mechanism.

It belongs to the NDK family. In terms of assembly, homotetramer. Mg(2+) serves as cofactor.

Its subcellular location is the cytoplasm. It catalyses the reaction a 2'-deoxyribonucleoside 5'-diphosphate + ATP = a 2'-deoxyribonucleoside 5'-triphosphate + ADP. The catalysed reaction is a ribonucleoside 5'-diphosphate + ATP = a ribonucleoside 5'-triphosphate + ADP. Major role in the synthesis of nucleoside triphosphates other than ATP. The ATP gamma phosphate is transferred to the NDP beta phosphate via a ping-pong mechanism, using a phosphorylated active-site intermediate. This is Nucleoside diphosphate kinase from Sulfurovum sp. (strain NBC37-1).